Reading from the N-terminus, the 347-residue chain is Glycerol-3-phosphate dehydrogenase [NAD(P)+] (347 aa).

NADPH contacts are provided by tryptophan 20, arginine 39, and lysine 118. Residues lysine 118, glycine 152, and serine 154 each contribute to the sn-glycerol 3-phosphate site. Residue alanine 156 coordinates NADPH. Positions 207, 260, 270, 271, and 272 each coordinate sn-glycerol 3-phosphate. Lysine 207 acts as the Proton acceptor in catalysis. Arginine 271 is an NADPH binding site. NADPH contacts are provided by valine 295 and glutamate 297.

Belongs to the NAD-dependent glycerol-3-phosphate dehydrogenase family.

The protein localises to the cytoplasm. It catalyses the reaction sn-glycerol 3-phosphate + NAD(+) = dihydroxyacetone phosphate + NADH + H(+). It carries out the reaction sn-glycerol 3-phosphate + NADP(+) = dihydroxyacetone phosphate + NADPH + H(+). The protein operates within membrane lipid metabolism; glycerophospholipid metabolism. In terms of biological role, catalyzes the reduction of the glycolytic intermediate dihydroxyacetone phosphate (DHAP) to sn-glycerol 3-phosphate (G3P), the key precursor for phospholipid synthesis. This chain is Glycerol-3-phosphate dehydrogenase [NAD(P)+], found in Cupriavidus pinatubonensis (strain JMP 134 / LMG 1197) (Cupriavidus necator (strain JMP 134)).